Consider the following 445-residue polypeptide: MIFTLLSTLPVLIITTELDYSELVHSAELVSSSSYIHHKTNKKPDNCTRDTDIIDRLLNGTGYNKFRIPQEEGMTVVVEIWIQAITSIDELTNDFDMDIYITETWLDPALNFQTMTPCKGNLSLNHQVLDRLWTPNSCFINSKVAQIHNSPFRSVFLMLFPNGTVMVNYRVRVKGPCSLDLSNFPLDLQKCSLIYESFNYNRQEVEMRWSDAEHPVFNLSKIMLPDFDLFEIQTERRQEPYPAGMWDELHVTIIFERRFIWYFMQAYLPTYLTIFISWISFSLGSRAIPARTMLGVNSLLAIVFSFGNIMRNLPRVSYIKGIDVWMLVSMTFIFCSLLELAIVGFMVRDETVAKKKQQKKISGNISREESPHGIISERRFMFPPGCSESSKSLSSCTSGWTPERIDSISSVMFPFSFFVFNIIYWFYYIHRKEIIKQNLINRVDG.

An N-terminal signal peptide occupies residues 1–26 (MIFTLLSTLPVLIITTELDYSELVHS). Topologically, residues 27–258 (AELVSSSSYI…LHVTIIFERR (232 aa)) are extracellular. N-linked (GlcNAc...) asparagine glycans are attached at residues Asn46, Asn59, Asn121, and Asn162. Cys177 and Cys191 are joined by a disulfide. Asn218 carries an N-linked (GlcNAc...) asparagine glycan. The helical transmembrane segment at 259-279 (FIWYFMQAYLPTYLTIFISWI) threads the bilayer. Over 280 to 286 (SFSLGSR) the chain is Cytoplasmic. The chain crosses the membrane as a helical span at residues 287-307 (AIPARTMLGVNSLLAIVFSFG). Topologically, residues 308–326 (NIMRNLPRVSYIKGIDVWM) are extracellular. The chain crosses the membrane as a helical span at residues 327 to 347 (LVSMTFIFCSLLELAIVGFMV). At 348-407 (RDETVAKKKQQKKISGNISREESPHGIISERRFMFPPGCSESSKSLSSCTSGWTPERIDS) the chain is on the cytoplasmic side. The chain crosses the membrane as a helical span at residues 408–428 (ISSVMFPFSFFVFNIIYWFYY). The Extracellular portion of the chain corresponds to 429-445 (IHRKEIIKQNLINRVDG).

This sequence belongs to the ligand-gated ion channel (TC 1.A.9) family. In terms of assembly, homopentamer (in vitro). May interact with either acc-3 or acc-4; the interactions do not result in significant heteropentameric ion channel activity. Expressed in RIA, RIG, PHA and AIZ glutamatergic neurons, URX and RIH cholinergic neurons, and in male-specific MCM neurons.

It localises to the cell membrane. Acetylcholine-gated chloride channel subunit. Currents in channels are triggered in response to acetylcholine. Channel properties may be modulated by the formation of homomeric and heteromeric channels. The polypeptide is Acetylcholine-gated chloride channel subunit acc-2 (Caenorhabditis elegans).